The primary structure comprises 503 residues: Aromatase (503 aa).

Helical transmembrane passes span 19–39 (EVVP…LLVW) and 53–73 (FLGI…IGSA). Residues aspartate 309 and methionine 374 each coordinate substrate. Cysteine 437 contributes to the heme binding site.

Belongs to the cytochrome P450 family. The cofactor is heme.

It is found in the endoplasmic reticulum membrane. Its subcellular location is the microsome membrane. It carries out the reaction testosterone + 3 reduced [NADPH--hemoprotein reductase] + 3 O2 = 17beta-estradiol + formate + 3 oxidized [NADPH--hemoprotein reductase] + 4 H2O + 4 H(+). The catalysed reaction is androst-4-ene-3,17-dione + 3 reduced [NADPH--hemoprotein reductase] + 3 O2 = estrone + formate + 3 oxidized [NADPH--hemoprotein reductase] + 4 H2O + 4 H(+). The enzyme catalyses androst-4-ene-3,17-dione + reduced [NADPH--hemoprotein reductase] + O2 = 19-hydroxyandrost-4-ene-3,17-dione + oxidized [NADPH--hemoprotein reductase] + H2O + H(+). It catalyses the reaction 19-hydroxyandrost-4-ene-3,17-dione + reduced [NADPH--hemoprotein reductase] + O2 = 19-oxo-androst-4-ene-3,17-dione + oxidized [NADPH--hemoprotein reductase] + 2 H2O + H(+). It carries out the reaction 19-oxo-androst-4-ene-3,17-dione + reduced [NADPH--hemoprotein reductase] + O2 = estrone + formate + oxidized [NADPH--hemoprotein reductase] + H2O + 2 H(+). The catalysed reaction is estrone + reduced [NADPH--hemoprotein reductase] + O2 = 2-hydroxyestrone + oxidized [NADPH--hemoprotein reductase] + H2O + H(+). The enzyme catalyses 17beta-hydroxy-5alpha-androstan-3-one + reduced [NADPH--hemoprotein reductase] + O2 = 17beta,19-dihydroxy-3-oxo-5alpha-androstanone + oxidized [NADPH--hemoprotein reductase] + H2O + H(+). It catalyses the reaction 17beta,19-dihydroxy-3-oxo-5alpha-androstanone + reduced [NADPH--hemoprotein reductase] + O2 = 17beta-hydroxy-3,19-dioxo-5alpha-androstanone + oxidized [NADPH--hemoprotein reductase] + 2 H2O + H(+). It carries out the reaction 17beta-hydroxy-3,19-dioxo-5alpha-androstanone + reduced [NADPH--hemoprotein reductase] + O2 = 17beta-hydroxy-3-oxo-19-nor-5alpha-androst-1-ene + formate + oxidized [NADPH--hemoprotein reductase] + H2O + 2 H(+). It functions in the pathway steroid hormone biosynthesis. In terms of biological role, a cytochrome P450 monooxygenase that catalyzes the conversion of C19 androgens, androst-4-ene-3,17-dione (androstenedione) and testosterone to the C18 estrogens, estrone and estradiol, respectively. Catalyzes three successive oxidations of C19 androgens: two conventional oxidations at C19 yielding 19-hydroxy and 19-oxo/19-aldehyde derivatives, followed by a third oxidative aromatization step that involves C1-beta hydrogen abstraction combined with cleavage of the C10-C19 bond to yield a phenolic A ring and formic acid. Alternatively, the third oxidative reaction yields a 19-norsteroid and formic acid. Converts dihydrotestosterone to delta1,10-dehydro 19-nordihydrotestosterone and may play a role in homeostasis of this potent androgen. Also displays 2-hydroxylase activity toward estrone. Mechanistically, uses molecular oxygen inserting one oxygen atom into a substrate, and reducing the second into a water molecule, with two electrons provided by NADPH via cytochrome P450 reductase (CPR; NADPH-ferrihemoprotein reductase). The protein is Aromatase (CYP19A1) of Bos taurus (Bovine).